We begin with the raw amino-acid sequence, 264 residues long: 3-methyl-2-oxobutanoate hydroxymethyltransferase (264 aa).

Positions 45 and 84 each coordinate Mg(2+). Residues 45-46 (DS), aspartate 84, and lysine 112 each bind 3-methyl-2-oxobutanoate. Residue glutamate 114 coordinates Mg(2+). Catalysis depends on glutamate 181, which acts as the Proton acceptor.

It belongs to the PanB family. As to quaternary structure, homodecamer; pentamer of dimers. It depends on Mg(2+) as a cofactor.

The protein localises to the cytoplasm. It catalyses the reaction 3-methyl-2-oxobutanoate + (6R)-5,10-methylene-5,6,7,8-tetrahydrofolate + H2O = 2-dehydropantoate + (6S)-5,6,7,8-tetrahydrofolate. It participates in cofactor biosynthesis; (R)-pantothenate biosynthesis; (R)-pantoate from 3-methyl-2-oxobutanoate: step 1/2. Functionally, catalyzes the reversible reaction in which hydroxymethyl group from 5,10-methylenetetrahydrofolate is transferred onto alpha-ketoisovalerate to form ketopantoate. In Shewanella oneidensis (strain ATCC 700550 / JCM 31522 / CIP 106686 / LMG 19005 / NCIMB 14063 / MR-1), this protein is 3-methyl-2-oxobutanoate hydroxymethyltransferase.